Here is a 301-residue protein sequence, read N- to C-terminus: MNPAACVGRFAPSPTGPLHLGSLVAAVASFLDARAAGGRWLVRMEDLDRPRCEPGAAGIILRQLEAYGLVWDGDVLVQSQRDHAYAAALDMLKAQGAAYPCACTRAQLVQAPRNREGEMLYPGTCRNGLPADTVARAWRVRAPDASIRLHDRIHGDLQQNLAREVGDFIVKRADGLFAYQLAVVVDDAFQGITHVVRGADLLWNTPRQIYLQGLLGVPTPTYAHVPLITNVAGQKLSKQTRAPALPERGRDATLAQALVTLGHPPPGELAGAAPAELLTWASTHWHIENVPTHPVVAKPAP.

Residues 9 to 13 (RFAPS) and Glu-45 contribute to the L-glutamate site. The 'HIGH' region signature appears at 12 to 22 (PSPTGPLHLGS). Zn(2+)-binding residues include Cys-101, Cys-103, Tyr-121, and Cys-125. L-glutamate is bound by residues Tyr-179 and Arg-197. The short motif at 235–239 (KLSKQ) is the 'KMSKS' region element. Position 238 (Lys-238) interacts with ATP.

It belongs to the class-I aminoacyl-tRNA synthetase family. GluQ subfamily. Zn(2+) is required as a cofactor.

In terms of biological role, catalyzes the tRNA-independent activation of glutamate in presence of ATP and the subsequent transfer of glutamate onto a tRNA(Asp). Glutamate is transferred on the 2-amino-5-(4,5-dihydroxy-2-cyclopenten-1-yl) moiety of the queuosine in the wobble position of the QUC anticodon. The polypeptide is Glutamyl-Q tRNA(Asp) synthetase (Thiobacillus denitrificans (strain ATCC 25259 / T1)).